Reading from the N-terminus, the 179-residue chain is Large ribosomal subunit protein uL5 (179 aa).

The protein belongs to the universal ribosomal protein uL5 family. As to quaternary structure, part of the 50S ribosomal subunit; part of the 5S rRNA/L5/L18/L25 subcomplex. Contacts the 5S rRNA and the P site tRNA. Forms a bridge to the 30S subunit in the 70S ribosome.

In terms of biological role, this is one of the proteins that bind and probably mediate the attachment of the 5S RNA into the large ribosomal subunit, where it forms part of the central protuberance. In the 70S ribosome it contacts protein S13 of the 30S subunit (bridge B1b), connecting the 2 subunits; this bridge is implicated in subunit movement. Contacts the P site tRNA; the 5S rRNA and some of its associated proteins might help stabilize positioning of ribosome-bound tRNAs. This Geobacillus sp. (strain WCH70) protein is Large ribosomal subunit protein uL5.